The following is a 166-amino-acid chain: Interferon gamma (166 aa).

An N-terminal signal peptide occupies residues 1-23 (MKYTSYFLALLLCVLLGFSGSYG). Pyrrolidone carboxylic acid is present on Gln-24. Residues Asn-39 and Asn-106 are each glycosylated (N-linked (GlcNAc...) asparagine).

This sequence belongs to the type II (or gamma) interferon family. In terms of assembly, homodimer. Interacts with IFNGR1 (via extracellular domain); this interaction promotes IFNGR1 dimerization. As to expression, released primarily from activated T lymphocytes.

The protein localises to the secreted. Type II interferon produced by immune cells such as T-cells and NK cells that plays crucial roles in antimicrobial, antiviral, and antitumor responses by activating effector immune cells and enhancing antigen presentation. Primarily signals through the JAK-STAT pathway after interaction with its receptor IFNGR1 to affect gene regulation. Upon IFNG binding, IFNGR1 intracellular domain opens out to allow association of downstream signaling components JAK2, JAK1 and STAT1, leading to STAT1 activation, nuclear translocation and transcription of IFNG-regulated genes. Many of the induced genes are transcription factors such as IRF1 that are able to further drive regulation of a next wave of transcription. Plays a role in class I antigen presentation pathway by inducing a replacement of catalytic proteasome subunits with immunoproteasome subunits. In turn, increases the quantity, quality, and repertoire of peptides for class I MHC loading. Increases the efficiency of peptide generation also by inducing the expression of activator PA28 that associates with the proteasome and alters its proteolytic cleavage preference. Up-regulates as well MHC II complexes on the cell surface by promoting expression of several key molecules such as cathepsins B/CTSB, H/CTSH, and L/CTSL. Participates in the regulation of hematopoietic stem cells during development and under homeostatic conditions by affecting their development, quiescence, and differentiation. This is Interferon gamma (IFNG) from Bubalus carabanensis (Swamp type water buffalo).